The sequence spans 118 residues: Large ribosomal subunit protein uL18 (118 aa).

The protein belongs to the universal ribosomal protein uL18 family. In terms of assembly, part of the 50S ribosomal subunit; part of the 5S rRNA/L5/L18/L25 subcomplex. Contacts the 5S and 23S rRNAs.

In terms of biological role, this is one of the proteins that bind and probably mediate the attachment of the 5S RNA into the large ribosomal subunit, where it forms part of the central protuberance. This is Large ribosomal subunit protein uL18 from Campylobacter concisus (strain 13826).